Consider the following 284-residue polypeptide: Bifunctional protein FolD (284 aa).

NADP(+) is bound by residues 165–167, Ser190, and Val231; that span reads GRS.

Belongs to the tetrahydrofolate dehydrogenase/cyclohydrolase family. Homodimer.

The catalysed reaction is (6R)-5,10-methylene-5,6,7,8-tetrahydrofolate + NADP(+) = (6R)-5,10-methenyltetrahydrofolate + NADPH. The enzyme catalyses (6R)-5,10-methenyltetrahydrofolate + H2O = (6R)-10-formyltetrahydrofolate + H(+). The protein operates within one-carbon metabolism; tetrahydrofolate interconversion. In terms of biological role, catalyzes the oxidation of 5,10-methylenetetrahydrofolate to 5,10-methenyltetrahydrofolate and then the hydrolysis of 5,10-methenyltetrahydrofolate to 10-formyltetrahydrofolate. This chain is Bifunctional protein FolD, found in Ruminiclostridium cellulolyticum (strain ATCC 35319 / DSM 5812 / JCM 6584 / H10) (Clostridium cellulolyticum).